Consider the following 264-residue polypeptide: Small ribosomal subunit protein uS2 (264 aa).

Belongs to the universal ribosomal protein uS2 family.

In Helicobacter pylori (strain ATCC 700392 / 26695) (Campylobacter pylori), this protein is Small ribosomal subunit protein uS2 (rpsB).